Here is a 195-residue protein sequence, read N- to C-terminus: GTP cyclohydrolase-2 (195 aa).

Residue 48–52 (RIHSE) participates in GTP binding. Residues cysteine 53, cysteine 64, and cysteine 66 each coordinate Zn(2+). GTP contacts are provided by residues glutamine 69, 90 to 92 (EGR), and threonine 112. The Proton acceptor role is filled by aspartate 124. Residue arginine 126 is the Nucleophile of the active site. The GTP site is built by threonine 147 and lysine 152.

The protein belongs to the GTP cyclohydrolase II family. Requires Zn(2+) as cofactor.

It catalyses the reaction GTP + 4 H2O = 2,5-diamino-6-hydroxy-4-(5-phosphoribosylamino)-pyrimidine + formate + 2 phosphate + 3 H(+). The protein operates within cofactor biosynthesis; riboflavin biosynthesis; 5-amino-6-(D-ribitylamino)uracil from GTP: step 1/4. In terms of biological role, catalyzes the conversion of GTP to 2,5-diamino-6-ribosylamino-4(3H)-pyrimidinone 5'-phosphate (DARP), formate and pyrophosphate. In Campylobacter fetus subsp. fetus (strain 82-40), this protein is GTP cyclohydrolase-2.